A 247-amino-acid chain; its full sequence is Protein NipSnap homolog 3B (247 aa).

An N6-succinyllysine mark is found at lysine 45 and lysine 57.

The protein belongs to the NipSnap family.

This chain is Protein NipSnap homolog 3B (NIPSNAP3B), found in Homo sapiens (Human).